The chain runs to 619 residues: Dihydroxy-acid dehydratase (619 aa).

D81 is a binding site for Mg(2+). C122 is a binding site for [2Fe-2S] cluster. Residues D123 and K124 each coordinate Mg(2+). An N6-carboxylysine modification is found at K124. A [2Fe-2S] cluster-binding site is contributed by C195. Position 494 (E494) interacts with Mg(2+). Residue S520 is the Proton acceptor of the active site.

This sequence belongs to the IlvD/Edd family. Homodimer. The cofactor is [2Fe-2S] cluster. Mg(2+) serves as cofactor.

It carries out the reaction (2R)-2,3-dihydroxy-3-methylbutanoate = 3-methyl-2-oxobutanoate + H2O. It catalyses the reaction (2R,3R)-2,3-dihydroxy-3-methylpentanoate = (S)-3-methyl-2-oxopentanoate + H2O. Its pathway is amino-acid biosynthesis; L-isoleucine biosynthesis; L-isoleucine from 2-oxobutanoate: step 3/4. It participates in amino-acid biosynthesis; L-valine biosynthesis; L-valine from pyruvate: step 3/4. Functions in the biosynthesis of branched-chain amino acids. Catalyzes the dehydration of (2R,3R)-2,3-dihydroxy-3-methylpentanoate (2,3-dihydroxy-3-methylvalerate) into 2-oxo-3-methylpentanoate (2-oxo-3-methylvalerate) and of (2R)-2,3-dihydroxy-3-methylbutanoate (2,3-dihydroxyisovalerate) into 2-oxo-3-methylbutanoate (2-oxoisovalerate), the penultimate precursor to L-isoleucine and L-valine, respectively. This chain is Dihydroxy-acid dehydratase, found in Shewanella sp. (strain MR-7).